A 106-amino-acid chain; its full sequence is Ferredoxin (106 aa).

Residues Cys9 and Cys17 each contribute to the [3Fe-4S] cluster site. Cys21, Cys40, Cys43, and Cys46 together coordinate [4Fe-4S] cluster. The 4Fe-4S ferredoxin-type domain maps to 31–60 (RMLYIHPDECVDCGACEPVCPVEAIYYEDD). Residue Cys50 coordinates [3Fe-4S] cluster. A disordered region spans residues 84-106 (GAAKVGKVDRDVEPVSSLPPQGE).

Requires [4Fe-4S] cluster as cofactor. It depends on [3Fe-4S] cluster as a cofactor.

In terms of biological role, ferredoxins are iron-sulfur proteins that transfer electrons in a wide variety of metabolic reactions. This chain is Ferredoxin (fdxA), found in Saccharopolyspora erythraea (Streptomyces erythraeus).